The primary structure comprises 741 residues: Phosphoribosylformylglycinamidine synthase subunit PurL (741 aa).

Residue H54 is part of the active site. Residues Y57 and K96 each contribute to the ATP site. Residue E98 coordinates Mg(2+). Residues 99–102 (SHNH) and R121 contribute to the substrate site. Residue H100 is the Proton acceptor of the active site. Residue D122 participates in Mg(2+) binding. Residue Q245 coordinates substrate. D273 is a binding site for Mg(2+). Residue 317–319 (ESQ) coordinates substrate. D500 and G537 together coordinate ATP. N538 is a binding site for Mg(2+). S540 is a binding site for substrate.

The protein belongs to the FGAMS family. As to quaternary structure, monomer. Part of the FGAM synthase complex composed of 1 PurL, 1 PurQ and 2 PurS subunits.

Its subcellular location is the cytoplasm. The catalysed reaction is N(2)-formyl-N(1)-(5-phospho-beta-D-ribosyl)glycinamide + L-glutamine + ATP + H2O = 2-formamido-N(1)-(5-O-phospho-beta-D-ribosyl)acetamidine + L-glutamate + ADP + phosphate + H(+). It functions in the pathway purine metabolism; IMP biosynthesis via de novo pathway; 5-amino-1-(5-phospho-D-ribosyl)imidazole from N(2)-formyl-N(1)-(5-phospho-D-ribosyl)glycinamide: step 1/2. Its function is as follows. Part of the phosphoribosylformylglycinamidine synthase complex involved in the purines biosynthetic pathway. Catalyzes the ATP-dependent conversion of formylglycinamide ribonucleotide (FGAR) and glutamine to yield formylglycinamidine ribonucleotide (FGAM) and glutamate. The FGAM synthase complex is composed of three subunits. PurQ produces an ammonia molecule by converting glutamine to glutamate. PurL transfers the ammonia molecule to FGAR to form FGAM in an ATP-dependent manner. PurS interacts with PurQ and PurL and is thought to assist in the transfer of the ammonia molecule from PurQ to PurL. The protein is Phosphoribosylformylglycinamidine synthase subunit PurL of Shouchella clausii (strain KSM-K16) (Alkalihalobacillus clausii).